A 272-amino-acid polypeptide reads, in one-letter code: Tryptophan synthase alpha chain (272 aa).

Catalysis depends on proton acceptor residues glutamate 60 and aspartate 71.

This sequence belongs to the TrpA family. In terms of assembly, tetramer of two alpha and two beta chains.

It carries out the reaction (1S,2R)-1-C-(indol-3-yl)glycerol 3-phosphate + L-serine = D-glyceraldehyde 3-phosphate + L-tryptophan + H2O. It functions in the pathway amino-acid biosynthesis; L-tryptophan biosynthesis; L-tryptophan from chorismate: step 5/5. Its function is as follows. The alpha subunit is responsible for the aldol cleavage of indoleglycerol phosphate to indole and glyceraldehyde 3-phosphate. The sequence is that of Tryptophan synthase alpha chain from Methanosarcina acetivorans (strain ATCC 35395 / DSM 2834 / JCM 12185 / C2A).